The following is a 267-amino-acid chain: tRNA pseudouridine synthase A (267 aa).

The active-site Nucleophile is D51. Y109 contacts substrate.

This sequence belongs to the tRNA pseudouridine synthase TruA family. As to quaternary structure, homodimer.

The enzyme catalyses uridine(38/39/40) in tRNA = pseudouridine(38/39/40) in tRNA. Its function is as follows. Formation of pseudouridine at positions 38, 39 and 40 in the anticodon stem and loop of transfer RNAs. The sequence is that of tRNA pseudouridine synthase A from Staphylococcus saprophyticus subsp. saprophyticus (strain ATCC 15305 / DSM 20229 / NCIMB 8711 / NCTC 7292 / S-41).